Reading from the N-terminus, the 141-residue chain is Ly6/PLAUR domain-containing protein 1 (141 aa).

An N-terminal signal peptide occupies residues 1 to 20 (MWVLGIAATFCGLFLLPGFA). Intrachain disulfides connect Cys-25-Cys-54, Cys-28-Cys-37, Cys-46-Cys-71, Cys-77-Cys-100, Cys-88-Cys-97, and Cys-101-Cys-106. A UPAR/Ly6 domain is found at 25 to 107 (CYQCEEFQLN…ISCCNTPLCN (83 aa)). N-linked (GlcNAc...) asparagine glycosylation is present at Asn-45. Ser-117 carries GPI-anchor amidated serine lipidation. Positions 118-141 (ASALRPGLRTTILFLKLALFSAHC) are cleaved as a propeptide — removed in mature form.

In terms of assembly, interacts with CHRNA4 and nAChRs containing alpha-4:beta-2 (CHRNA4:CHRNB2) and alpha-7 (CHRNA7) subunits.

The protein resides in the cell membrane. Its function is as follows. Believed to act as a modulator of nicotinic acetylcholine receptors (nAChRs) activity. In vitro increases receptor desensitization and decreases affinity for ACh of alpha-4:beta-2-containing nAChRs. May play a role in the intracellular trafficking of alpha-4:beta-2 and alpha-7-containing nAChRs and may inhibit their expression at the cell surface. May be involved in the control of anxiety. This Homo sapiens (Human) protein is Ly6/PLAUR domain-containing protein 1 (LYPD1).